The following is a 288-amino-acid chain: MVLEIVLITGMSGSGKSVALHALEDAGYYCVDNLPPQLLPAFVALEHHHHGNRVAIAMDVRSATSLHQVPQELHRLRSQGVAVQSIFLDATIDTLVRRFSETRRRHPLSHDDPQQERKALVQIIDLERELLADLREASHVIDTSQIRASQLQSYVKSLMPGAQGQLTLVFQSFAFKRGIPMDADYVFDVRMLANPYYEPALRELTGLDEPVADFLQLQPDVDLMRAHIEQFLAHWLELLDRNHRSYVTVAIGCTGGQHRSVYLVERLAQSFGNRWTALKRHRELDGRQ.

10–17 (GMSGSGKS) contacts ATP. 59 to 62 (DVRS) contacts GTP.

It belongs to the RapZ-like family.

Displays ATPase and GTPase activities. This Verminephrobacter eiseniae (strain EF01-2) protein is Nucleotide-binding protein Veis_1053.